A 289-amino-acid chain; its full sequence is Xylosylprotein 4-beta-galactosyltransferase (289 aa).

At 1 to 6 (MKLKTR) the chain is on the cytoplasmic side. Residues 7–27 (LILSGTILISLAACYFLVLLV) traverse the membrane as a helical; Signal-anchor for type II membrane protein segment. At 28-289 (LDLEITRDLM…DLNWTPYCKS (262 aa)) the chain is on the lumenal side. 58 to 62 (PYRDR) contacts UDP-alpha-D-galactose. N-linked (GlcNAc...) asparagine glycosylation is found at Asn-81 and Asn-90. Residues 97-99 (FNR), 123-124 (VD), Tyr-154, and Trp-184 each bind UDP-alpha-D-galactose. Residue Asp-124 coordinates Mn(2+). 186–189 (LEDD) is a binding site for N-acetyl-D-glucosamine. An N-linked (GlcNAc...) asparagine glycan is attached at Asn-201. A disordered region spans residues 214-236 (NTFRHIHGPKRKRDYTPKKNDKN). Basic residues predominate over residues 217 to 226 (RHIHGPKRKR). His-218 serves as a coordination point for Mn(2+). 218–220 (HIH) contributes to the UDP-alpha-D-galactose binding site. Residues 227-236 (DYTPKKNDKN) are compositionally biased toward basic and acidic residues.

The protein belongs to the glycosyltransferase 7 family. Mn(2+) serves as cofactor.

Its subcellular location is the membrane. The enzyme catalyses 3-O-(beta-D-xylosyl)-L-seryl-[protein] + UDP-alpha-D-galactose = 3-O-(beta-D-galactosyl-(1-&gt;4)-beta-D-xylosyl)-L-seryl-[protein] + UDP + H(+). It functions in the pathway protein modification; protein glycosylation. In terms of biological role, glycosyltransferase required for the biosynthesis of the tetrasaccharide (GlcA-Gal-Gal-Xyl-)Ser core linker of heparan sulfate and chondroitin sulfate. Required for embryonic development. Involved in vulval epithelium invagination. Required for axon regeneration after injury. The protein is Xylosylprotein 4-beta-galactosyltransferase (sqv-3) of Caenorhabditis elegans.